The sequence spans 264 residues: Indolethylamine N-methyltransferase (264 aa).

Lys14 bears the N6-succinyllysine mark. S-adenosyl-L-methionine is bound by residues Tyr21, Tyr26, 64-65 (GS), Tyr70, Asp86, and Asn91. Residue Lys97 is modified to N6-succinyllysine. S-adenosyl-L-methionine contacts are provided by residues 143-144 (DV) and Phe164.

It belongs to the class I-like SAM-binding methyltransferase superfamily. NNMT/PNMT/TEMT family. In terms of assembly, monomer. In terms of tissue distribution, detected in lung and liver (at protein level).

The protein resides in the cytoplasm. It catalyses the reaction a tertiary amine + S-adenosyl-L-methionine = a methylated tertiary amine + S-adenosyl-L-homocysteine + H(+). The catalysed reaction is a secondary amine + S-adenosyl-L-methionine = a methylated secondary amine + S-adenosyl-L-homocysteine + H(+). The enzyme catalyses a primary amine + S-adenosyl-L-methionine = a methylated primary amine + S-adenosyl-L-homocysteine + H(+). It carries out the reaction dimethyl sulfide + S-adenosyl-L-methionine = trimethylsulfonium + S-adenosyl-L-homocysteine. Inhibited by the S-adenosyl-L-methionine analog sinefungin and by the product S-adenosyl-L-homocysteine. Catalyzes the N-methylation of tryptamine and structurally related compounds. Functions as a thioether S-methyltransferase and is active with a variety of thioethers and the corresponding selenium and tellurium compounds, including 3-methylthiopropionaldehyde, dimethyl selenide, dimethyl telluride, 2-methylthioethylamine, 2-methylthioethanol, methyl-n-propyl sulfide and diethyl sulfide. Plays an important role in the detoxification of selenium compounds. This is Indolethylamine N-methyltransferase (Inmt) from Mus musculus (Mouse).